We begin with the raw amino-acid sequence, 257 residues long: Acetylglutamate kinase (257 aa).

Substrate is bound by residues 43–44 (GG), arginine 65, and asparagine 157. ATP is bound by residues 180–185 (DVSGIL) and 208–210 (IIT).

The protein belongs to the acetylglutamate kinase family. ArgB subfamily. Homodimer.

It is found in the cytoplasm. The catalysed reaction is N-acetyl-L-glutamate + ATP = N-acetyl-L-glutamyl 5-phosphate + ADP. It participates in amino-acid biosynthesis; L-arginine biosynthesis; N(2)-acetyl-L-ornithine from L-glutamate: step 2/4. In terms of biological role, catalyzes the ATP-dependent phosphorylation of N-acetyl-L-glutamate. This chain is Acetylglutamate kinase, found in Photorhabdus laumondii subsp. laumondii (strain DSM 15139 / CIP 105565 / TT01) (Photorhabdus luminescens subsp. laumondii).